Reading from the N-terminus, the 515-residue chain is Fibril protein (515 aa).

Residue Met-1 is modified to Blocked amino end (Met). 4 helical regions span residues 21–34 (VKKY…IQHV), 206–228 (HKFK…FNLL), 357–376 (KIET…AEKC), and 426–440 (SNEF…LKDV).

The protein resides in the cytoplasm. It is found in the cytoskeleton. Acts as a cytoskeletal structure involved in the shape and motility of spiroplasmas. The polypeptide is Fibril protein (Spiroplasma citri).